A 505-amino-acid polypeptide reads, in one-letter code: 4-alpha-glucanotransferase (505 aa).

This sequence belongs to the disproportionating enzyme family.

It is found in the cytoplasm. It carries out the reaction Transfers a segment of a (1-&gt;4)-alpha-D-glucan to a new position in an acceptor, which may be glucose or a (1-&gt;4)-alpha-D-glucan.. This Streptococcus pneumoniae serotype 4 (strain ATCC BAA-334 / TIGR4) protein is 4-alpha-glucanotransferase (malQ).